The chain runs to 391 residues: GTPase Obg (391 aa).

Positions 1–159 (MKFLDQAKIF…IWVWLRLKLI (159 aa)) constitute an Obg domain. One can recognise an OBG-type G domain in the interval 160–327 (ADAGLIGLPN…VLRVMATHVD (168 aa)). GTP-binding positions include 166-173 (GLPNAGKS), 191-195 (FTTLH), 212-215 (DIPG), 279-282 (SKID), and 308-310 (SAI). 2 residues coordinate Mg(2+): Ser173 and Thr193. The tract at residues 352 to 391 (TGIDHGYNRPSAVVDWEDAPFDDDDDDDGDESGDKGQWTR) is disordered. Over residues 366 to 382 (DWEDAPFDDDDDDDGDE) the composition is skewed to acidic residues.

Belongs to the TRAFAC class OBG-HflX-like GTPase superfamily. OBG GTPase family. In terms of assembly, monomer. Mg(2+) serves as cofactor.

The protein resides in the cytoplasm. An essential GTPase which binds GTP, GDP and possibly (p)ppGpp with moderate affinity, with high nucleotide exchange rates and a fairly low GTP hydrolysis rate. Plays a role in control of the cell cycle, stress response, ribosome biogenesis and in those bacteria that undergo differentiation, in morphogenesis control. This is GTPase Obg from Rhodospirillum rubrum (strain ATCC 11170 / ATH 1.1.1 / DSM 467 / LMG 4362 / NCIMB 8255 / S1).